The chain runs to 61 residues: Defensin BmKDfsin2 (61 aa).

A signal peptide spans 1 to 24 (METIVLLFLLALVFCTLEMGMVEA). Disulfide bonds link C28–C49, C35–C57, and C39–C59.

This sequence belongs to the invertebrate defensin family. Type 2 subfamily. Highly expressed in non-venom gland (hemolymph) and moderately expressed in venom gland.

Its subcellular location is the secreted. Its function is as follows. Antibacterial peptide active against Gram-positive bacteria, but not on Gram-negative bacteria. Also has weak blocking activity on Kv1.1/KCNA1, Kv1.2/KCNA2, Kv1.3/KCNA3, KCa3.1/KCNN4/IK, KCa2.3/KCNN3/SK3 and Kv11.1/KCNH2/ERG1 channels (tested at 1 uM). It inhibits potassium channel current by interacting with the pore region. The polypeptide is Defensin BmKDfsin2 (Olivierus martensii (Manchurian scorpion)).